We begin with the raw amino-acid sequence, 338 residues long: Anthranilate phosphoribosyltransferase (338 aa).

Residues G81, 84–85, T89, 91–94, 109–117, and S121 each bind 5-phospho-alpha-D-ribose 1-diphosphate; these read GD, NVST, and KHGNRSVSS. An anthranilate-binding site is contributed by G81. S93 contacts Mg(2+). N112 is an anthranilate binding site. R167 contributes to the anthranilate binding site. 2 residues coordinate Mg(2+): D226 and E227.

Belongs to the anthranilate phosphoribosyltransferase family. In terms of assembly, homodimer. Requires Mg(2+) as cofactor.

The catalysed reaction is N-(5-phospho-beta-D-ribosyl)anthranilate + diphosphate = 5-phospho-alpha-D-ribose 1-diphosphate + anthranilate. The protein operates within amino-acid biosynthesis; L-tryptophan biosynthesis; L-tryptophan from chorismate: step 2/5. In terms of biological role, catalyzes the transfer of the phosphoribosyl group of 5-phosphorylribose-1-pyrophosphate (PRPP) to anthranilate to yield N-(5'-phosphoribosyl)-anthranilate (PRA). The sequence is that of Anthranilate phosphoribosyltransferase from Alkalilimnicola ehrlichii (strain ATCC BAA-1101 / DSM 17681 / MLHE-1).